The sequence spans 682 residues: Potassium-transporting ATPase ATP-binding subunit (682 aa).

A run of 4 helical transmembrane segments spans residues 34-54 (PVMFIVWIGSLLTTCISIAMA), 62-82 (ALFSAAISGWLWVTVLFANFA), 219-239 (IALTILLIALTIVFLLATATL), and 254-274 (VLVALLVCLIPTTIGGLLSAI). The active-site 4-aspartylphosphate intermediate is the Asp307. Residues Asp344, Glu348, 377–384 (FTAQSRMS), and Lys395 each bind ATP. Mg(2+)-binding residues include Asp518 and Asp522. Transmembrane regions (helical) follow at residues 588 to 608 (FAIIPAAFAATYPQLNALNIM), 616 to 636 (AILSAVIFNALIIVFLIPLAL), and 656 to 676 (IYGLGGLLVPFIGIKVIDLLL).

It belongs to the cation transport ATPase (P-type) (TC 3.A.3) family. Type IA subfamily. The system is composed of three essential subunits: KdpA, KdpB and KdpC.

It localises to the cell inner membrane. It carries out the reaction K(+)(out) + ATP + H2O = K(+)(in) + ADP + phosphate + H(+). Part of the high-affinity ATP-driven potassium transport (or Kdp) system, which catalyzes the hydrolysis of ATP coupled with the electrogenic transport of potassium into the cytoplasm. This subunit is responsible for energy coupling to the transport system and for the release of the potassium ions to the cytoplasm. The protein is Potassium-transporting ATPase ATP-binding subunit of Shigella boydii serotype 4 (strain Sb227).